The primary structure comprises 408 residues: Phosphoglycerate kinase (408 aa).

Residues 24–26 (DIN), Arg40, 63–66 (HQGR), Arg120, and Arg160 each bind substrate. Residues Glu331 and 357 to 360 (GGHM) each bind ATP.

Belongs to the phosphoglycerate kinase family.

Its subcellular location is the cytoplasm. It carries out the reaction (2R)-3-phosphoglycerate + ATP = (2R)-3-phospho-glyceroyl phosphate + ADP. It functions in the pathway carbohydrate degradation; glycolysis; pyruvate from D-glyceraldehyde 3-phosphate: step 2/5. In Saccharolobus solfataricus (strain ATCC 35092 / DSM 1617 / JCM 11322 / P2) (Sulfolobus solfataricus), this protein is Phosphoglycerate kinase (pgk).